The chain runs to 3068 residues: Highly reducing polyketide synthase 17 (3068 aa).

In terms of domain architecture, Ketosynthase family 3 (KS3) spans 100-526 (IEPIAIVGAS…GTNAHAIMER (427 aa)). Residues C274, H410, and H449 each act as for beta-ketoacyl synthase activity in the active site. Positions 627 to 938 (YVFTGQGAQW…LAGPIRQCLA (312 aa)) are malonyl-CoA:ACP transacylase (MAT) domain. The active-site For malonyltransferase activity is the S721. The tract at residues 1027-1160 (HHLLGVRMTE…GVVEGVMTLD (134 aa)) is N-terminal hotdog fold. A dehydratase (DH) domain region spans residues 1027-1311 (HHLLGVRMTE…RASNIDMTIV (285 aa)). Positions 1027 to 1334 (HHLLGVRMTE…SRSLAAHVDG (308 aa)) constitute a PKS/mFAS DH domain. Catalysis depends on H1059, which acts as the Proton acceptor; for dehydratase activity. The tract at residues 1179 to 1334 (NRTMVIPEEL…SRSLAAHVDG (156 aa)) is C-terminal hotdog fold. The Proton donor; for dehydratase activity role is filled by D1247. The interval 1735–2037 (LGPVQSSKGD…LVRQGGKVIL (303 aa)) is enoylreductase (ER) domain. The catalytic ketoreductase (KR) domain stretch occupies residues 2062–2240 (AAYVVAGGMG…FLSMNIGWIE (179 aa)). The Carrier domain occupies 2345–2423 (TIIDFISSAI…DLAEKVASRS (79 aa)). Position 2383 is an O-(pantetheine 4'-phosphoryl)serine (S2383). The tract at residues 2831–3062 (FDVASLGLRS…SCMITSLLED (232 aa)) is choline/carnitine acyltransferase (cAT) domain.

Its pathway is secondary metabolite biosynthesis. Highly reducing polyketide synthase; part of the gene cluster that mediates the biosynthesis of (2Z,4E,6E,10E)-9-hydroxydodeca-2,4,6,10-tetraenoic acid (BAA), (2E,4E,6E,10E)-9-hydroxydodeca-2,4,6,10-tetraenoic acid (BAB), and (2Z,4E,6E)-octa-2,4,6-trienedioic acid (PBA). The highly reducing polyketide synthase Ba17a is sufficent to produce PBA and BAA. The still to be characterized protein Ba17b leads to an increased production of BAA as well as to the production of the new compound BAB. BAA does not possess insecticidal activity against G.mellonella larvae, however, both BAA and BAB increase the growth of Candida albicans and BAA can mitigate the fungicidal effects of fluconazole over C.albicans, suggesting that generalist pathogens such as M.anisopliae, can potentially manipulate the yeast microbiota found in arthropods (and anywhere else) by the activity of compounds as BAA and BAB. This is Highly reducing polyketide synthase 17 from Metarhizium anisopliae (Entomophthora anisopliae).